Reading from the N-terminus, the 131-residue chain is UPF0102 protein YraN (131 aa).

The span at 1-19 shows a compositional bias: polar residues; that stretch reads MATVPTRSGSPRQLTTKQT. The segment at 1–20 is disordered; the sequence is MATVPTRSGSPRQLTTKQTG.

Belongs to the UPF0102 family.

The sequence is that of UPF0102 protein YraN from Escherichia fergusonii (strain ATCC 35469 / DSM 13698 / CCUG 18766 / IAM 14443 / JCM 21226 / LMG 7866 / NBRC 102419 / NCTC 12128 / CDC 0568-73).